The chain runs to 152 residues: Large ribosomal subunit protein bL9 (152 aa).

It belongs to the bacterial ribosomal protein bL9 family.

Its function is as follows. Binds to the 23S rRNA. The chain is Large ribosomal subunit protein bL9 from Trichormus variabilis (strain ATCC 29413 / PCC 7937) (Anabaena variabilis).